The sequence spans 277 residues: Urease accessory protein UreD (277 aa).

It belongs to the UreD family. As to quaternary structure, ureD, UreF and UreG form a complex that acts as a GTP-hydrolysis-dependent molecular chaperone, activating the urease apoprotein by helping to assemble the nickel containing metallocenter of UreC. The UreE protein probably delivers the nickel.

The protein resides in the cytoplasm. In terms of biological role, required for maturation of urease via the functional incorporation of the urease nickel metallocenter. This Yersinia pestis bv. Antiqua (strain Antiqua) protein is Urease accessory protein UreD.